Consider the following 67-residue polypeptide: Large ribosomal subunit protein uL29 (67 aa).

The protein belongs to the universal ribosomal protein uL29 family.

This chain is Large ribosomal subunit protein uL29, found in Alkaliphilus metalliredigens (strain QYMF).